The following is a 414-amino-acid chain: NADH-dependent flavin oxidoreductase iccE (414 aa).

Residues 25–28 (TAIA) and glutamine 107 each bind FMN. 188–191 (HASH) serves as a coordination point for substrate. Residue 347 to 348 (AR) coordinates FMN.

This sequence belongs to the NADH:flavin oxidoreductase/NADH oxidase family.

It carries out the reaction 8-epi-ilicicolin H = ilicicolin H. It functions in the pathway mycotoxin biosynthesis. In terms of biological role, NADH-dependent flavin oxidoreductase; part of the gene cluster that mediates the biosynthesis of ilicicolin H, a 4-hydroxy-2-pyridonealkaloid that has potent and broad antifungal activities by inhibiting the mitochondrial respiration chain. IccE acts as an epimerase and catalyzes the conversion of 8-epi-ilicicolin H into the final product ilicicolin H. The biosynthesis of ilicicolin H starts with formation of the tetramic acid by the hybrid PKS-NRPS synthetase iccA with the partnering trans-enoyl reductase iccB since iccA lacks a designated enoylreductase (ER) domain. The cytochrome P450 monooxygenase iccC then catalyzes the ring expansion of the tetramate to the acyclic 2-pyridone. The pericyclase iccD further converts the acyclic 2-pyridone into 8-epi-ilicicolin H. Finally, the epimerase iccE converts 8-epi-ilicicolin H into ilicicolin H via epimerization. IccA to iccE are sufficient for ilicicolin H biosynthesis and the roles of the remaining enzymes, iccF, iccG and iccH within the pathway have still to be determined. This is NADH-dependent flavin oxidoreductase iccE from Talaromyces variabilis (Penicillium variabile).